A 221-amino-acid chain; its full sequence is UPF0758 protein NTHI1125 (221 aa).

In terms of domain architecture, MPN spans 98-221 (PIINDLETVK…CYSFAENCLL (124 aa)). Zn(2+)-binding residues include His170, His172, and Asp183. The JAMM motif signature appears at 170–183 (HNHPSGITEPSYSD).

The protein belongs to the UPF0758 family.

This chain is UPF0758 protein NTHI1125, found in Haemophilus influenzae (strain 86-028NP).